Consider the following 92-residue polypeptide: Large ribosomal subunit protein bL25 (92 aa).

It belongs to the bacterial ribosomal protein bL25 family. In terms of assembly, part of the 50S ribosomal subunit; part of the 5S rRNA/L5/L18/L25 subcomplex. Contacts the 5S rRNA. Binds to the 5S rRNA independently of L5 and L18.

This is one of the proteins that binds to the 5S RNA in the ribosome where it forms part of the central protuberance. This chain is Large ribosomal subunit protein bL25, found in Vibrio atlanticus (strain LGP32) (Vibrio splendidus (strain Mel32)).